We begin with the raw amino-acid sequence, 194 residues long: Cytochrome bo(3) ubiquinol oxidase subunit 3 (194 aa).

At 1–18 the chain is on the cytoplasmic side; sequence MKKKYKIDTNIFSKELLG. Residues 19–41 form a helical membrane-spanning segment; sequence FWLYLMSDCIIFCTLFSVYFILV. The Extracellular segment spans residues 42–55; it reads DNVAQGPSGHNIFQ. A helical transmembrane segment spans residues 56–78; that stretch reads NNLIIIETFLLLFSSFSCNLVLF. At 79 to 84 the chain is on the cytoplasmic side; that stretch reads EMKNKN. A helical membrane pass occupies residues 85–107; that stretch reads LYMVFLWLGITFLLGLLFVFLEL. Residues 108 to 126 lie on the Extracellular side of the membrane; it reads FEFFHLINLGFGPTRSGFL. Residues 127-149 traverse the membrane as a helical segment; that stretch reads SSFFVLIATHGIHVISGLIWIIV. Topologically, residues 150–169 are cytoplasmic; sequence MIKYVYTFNITNLIYYRMLC. Residues 170–192 traverse the membrane as a helical segment; it reads LNLFWHFLDIVWVFIFSFVYLFG. Residues 193-194 are Extracellular-facing; that stretch reads MV.

Belongs to the cytochrome c oxidase subunit 3 family. As to quaternary structure, heterooctamer of two A chains, two B chains, two C chains and two D chains.

The protein resides in the cell membrane. Cytochrome bo(3) ubiquinol terminal oxidase is the component of the aerobic respiratory chain of E.coli that predominates when cells are grown at high aeration. Has proton pump activity across the membrane in addition to electron transfer, pumping 2 protons/electron. This chain is Cytochrome bo(3) ubiquinol oxidase subunit 3 (cyoC), found in Buchnera aphidicola subsp. Baizongia pistaciae (strain Bp).